We begin with the raw amino-acid sequence, 300 residues long: Bifunctional protein FolD (300 aa).

NADP(+) is bound by residues 168-170, Ser-193, and Ile-234; that span reads GRS.

Belongs to the tetrahydrofolate dehydrogenase/cyclohydrolase family. In terms of assembly, homodimer.

The catalysed reaction is (6R)-5,10-methylene-5,6,7,8-tetrahydrofolate + NADP(+) = (6R)-5,10-methenyltetrahydrofolate + NADPH. The enzyme catalyses (6R)-5,10-methenyltetrahydrofolate + H2O = (6R)-10-formyltetrahydrofolate + H(+). It functions in the pathway one-carbon metabolism; tetrahydrofolate interconversion. In terms of biological role, catalyzes the oxidation of 5,10-methylenetetrahydrofolate to 5,10-methenyltetrahydrofolate and then the hydrolysis of 5,10-methenyltetrahydrofolate to 10-formyltetrahydrofolate. This Ehrlichia ruminantium (strain Welgevonden) protein is Bifunctional protein FolD.